Reading from the N-terminus, the 294-residue chain is 4-hydroxy-tetrahydrodipicolinate synthase (294 aa).

Position 47 (Thr-47) interacts with pyruvate. Tyr-135 serves as the catalytic Proton donor/acceptor. Lys-163 serves as the catalytic Schiff-base intermediate with substrate. Residue Thr-205 coordinates pyruvate.

The protein belongs to the DapA family. In terms of assembly, homotetramer; dimer of dimers.

The protein localises to the cytoplasm. The catalysed reaction is L-aspartate 4-semialdehyde + pyruvate = (2S,4S)-4-hydroxy-2,3,4,5-tetrahydrodipicolinate + H2O + H(+). The protein operates within amino-acid biosynthesis; L-lysine biosynthesis via DAP pathway; (S)-tetrahydrodipicolinate from L-aspartate: step 3/4. Its function is as follows. Catalyzes the condensation of (S)-aspartate-beta-semialdehyde [(S)-ASA] and pyruvate to 4-hydroxy-tetrahydrodipicolinate (HTPA). The protein is 4-hydroxy-tetrahydrodipicolinate synthase of Rickettsia montanensis.